A 284-amino-acid chain; its full sequence is Bifunctional protein FolD 1 (284 aa).

Residues 166–168 (GAS) and I232 contribute to the NADP(+) site.

It belongs to the tetrahydrofolate dehydrogenase/cyclohydrolase family. As to quaternary structure, homodimer.

It carries out the reaction (6R)-5,10-methylene-5,6,7,8-tetrahydrofolate + NADP(+) = (6R)-5,10-methenyltetrahydrofolate + NADPH. The enzyme catalyses (6R)-5,10-methenyltetrahydrofolate + H2O = (6R)-10-formyltetrahydrofolate + H(+). It functions in the pathway one-carbon metabolism; tetrahydrofolate interconversion. Catalyzes the oxidation of 5,10-methylenetetrahydrofolate to 5,10-methenyltetrahydrofolate and then the hydrolysis of 5,10-methenyltetrahydrofolate to 10-formyltetrahydrofolate. In Pseudomonas syringae pv. tomato (strain ATCC BAA-871 / DC3000), this protein is Bifunctional protein FolD 1.